Here is a 501-residue protein sequence, read N- to C-terminus: Ribose import ATP-binding protein RbsA (501 aa).

2 ABC transporter domains span residues 5 to 241 (LQLQ…VGRK) and 252 to 495 (APGE…VGKQ). 37 to 44 (GENGAGKS) contacts ATP.

This sequence belongs to the ABC transporter superfamily. Ribose importer (TC 3.A.1.2.1) family. The complex is composed of an ATP-binding protein (RbsA), two transmembrane proteins (RbsC) and a solute-binding protein (RbsB).

It is found in the cell inner membrane. The catalysed reaction is D-ribose(out) + ATP + H2O = D-ribose(in) + ADP + phosphate + H(+). Its function is as follows. Part of the ABC transporter complex RbsABC involved in ribose import. Responsible for energy coupling to the transport system. In Pectobacterium atrosepticum (strain SCRI 1043 / ATCC BAA-672) (Erwinia carotovora subsp. atroseptica), this protein is Ribose import ATP-binding protein RbsA.